A 261-amino-acid chain; its full sequence is Carnitinyl-CoA dehydratase (261 aa).

The active-site Nucleophile is E111. Residue E131 is the Proton acceptor of the active site.

This sequence belongs to the enoyl-CoA hydratase/isomerase family.

It catalyses the reaction (R)-carnitinyl-CoA = crotonobetainyl-CoA + H2O. It participates in amine and polyamine metabolism; carnitine metabolism. Catalyzes the reversible dehydration of L-carnitinyl-CoA to crotonobetainyl-CoA. The chain is Carnitinyl-CoA dehydratase from Escherichia coli (strain ATCC 8739 / DSM 1576 / NBRC 3972 / NCIMB 8545 / WDCM 00012 / Crooks).